A 329-amino-acid polypeptide reads, in one-letter code: GTPase Obg (329 aa).

Positions 1–159 (MQFIDEAKIF…MWVWLHLKLL (159 aa)) constitute an Obg domain. The 168-residue stretch at 160-327 (SDVGLVGLPN…LLANILSELQ (168 aa)) folds into the OBG-type G domain. Residues 166–173 (GLPNAGKS), 191–195 (FTTLT), 212–215 (DIPG), 279–282 (TKTD), and 308–310 (SSY) contribute to the GTP site. Ser-173 and Thr-193 together coordinate Mg(2+).

The protein belongs to the TRAFAC class OBG-HflX-like GTPase superfamily. OBG GTPase family. As to quaternary structure, monomer. The cofactor is Mg(2+).

It is found in the cytoplasm. An essential GTPase which binds GTP, GDP and possibly (p)ppGpp with moderate affinity, with high nucleotide exchange rates and a fairly low GTP hydrolysis rate. Plays a role in control of the cell cycle, stress response, ribosome biogenesis and in those bacteria that undergo differentiation, in morphogenesis control. This is GTPase Obg from Orientia tsutsugamushi (strain Ikeda) (Rickettsia tsutsugamushi).